We begin with the raw amino-acid sequence, 227 residues long: Transmembrane emp24 domain-containing protein 4 (227 aa).

The first 29 residues, Met-1 to Gly-29, serve as a signal peptide directing secretion. The Lumenal segment spans residues Leu-30–Arg-194. Residues Lys-39–Val-137 form the GOLD domain. Asn-117 is a glycosylation site (N-linked (GlcNAc...) asparagine). The stretch at Ile-147–Tyr-176 forms a coiled coil. A helical membrane pass occupies residues Val-195 to Trp-212. Topologically, residues Gln-213–Val-227 are cytoplasmic. The COPII vesicle coat-binding signature appears at Phe-220–Phe-221. A COPI vesicle coat-binding motif is present at residues Phe-220 to Val-227.

Belongs to the EMP24/GP25L family.

It localises to the endoplasmic reticulum membrane. In terms of biological role, involved in vesicular protein trafficking, mainly in the early secretory pathway. Involved in the maintenance of the Golgi apparatus. Appears to play a role in the biosynthesis of secreted cargo including processing. Involved in endoplasmic reticulum stress response. May play a role in the regulation of heat-shock response and apoptosis. This Mus musculus (Mouse) protein is Transmembrane emp24 domain-containing protein 4 (Tmed4).